The sequence spans 1276 residues: Probable outer membrane protein pmp6 (1276 aa).

The signal sequence occupies residues 1–23 (MKYSLPWLLTSSALVFSLHPLMA). In terms of domain architecture, Autotransporter spans 981–1276 (DAPSHPGIWI…NANCGTRYSF (296 aa)).

Belongs to the PMP outer membrane protein family.

The protein localises to the secreted. It localises to the cell wall. The protein resides in the cell outer membrane. This is Probable outer membrane protein pmp6 (pmp6) from Chlamydia pneumoniae (Chlamydophila pneumoniae).